The following is a 504-amino-acid chain: MASALSCSASDLIPLLSGGANATAAAAAAEYICGRFDTVAGKFTDAAYAIDNTYLLFSAYLVFAMQLGFAMLCAGSVRAKNTMNIMLTNVIDAAAGGLFYYLFGFAFAFGSPSNGFIGKHFFGMYDFPQPTFDYPYFLYQWTFAIAAAGITSGSIAERTQFVAYLIYSSFLTGLVYPIVSHWFWSSDGWASPARSENLLFQSGVIDFAGSGVVHMVGGIAGLWGALIEGPRIGRFGVGGKPVTLRGHSATLVVLGTFLLWFGWYGFNPGSFATIFKAYGETPGSSFYGQWSAVGRTAVTTTLAGCTAALTTLFGKRLIDGYWNVTDVCNGLLGGFAAITSGCSVVEPWAALVCGFVAAWVLMGCNRLAEKLQFDDPLEAAQLHGGCGAWGIIFTGLFAEKRYIAEIFGGDPNRPFGLLMGGGGRLLAAHVVQILVITGWVSVTMGTLFFILHKLKLLRIPAEDEIAGVDPTSHGGLAYMYTEDEIRNGIMVRRVGGDNDPNVGV.

12 consecutive transmembrane segments (helical) span residues 12–32, 55–75, 90–110, 136–156, 161–181, 207–227, 251–271, 292–314, 318–338, 344–364, 377–397, and 430–450; these read LIPL…AEYI, LLFS…LCAG, VIDA…FAFG, YFLY…GSIA, FVAY…IVSH, FAGS…GALI, LVVL…PGSF, AVGR…TLFG, IDGY…FAAI, VVEP…LMGC, LEAA…TGLF, and VVQI…LFFI. At threonine 471 the chain carries Phosphothreonine.

Belongs to the ammonia transporter channel (TC 1.A.11.2) family. In terms of tissue distribution, specifically expressed in pollen grains and tubes.

It is found in the cell membrane. Its function is as follows. High affinity ammonium transporter in the plasma membrane. This is Ammonium transporter 1 member 4 (AMT1-4) from Arabidopsis thaliana (Mouse-ear cress).